The chain runs to 569 residues: Glutamate--tRNA ligase (569 aa).

Residues 108–118 carry the 'HIGH' region motif; it reads PNPDFVLHLGS.

It belongs to the class-I aminoacyl-tRNA synthetase family. Glutamate--tRNA ligase type 2 subfamily.

Its subcellular location is the cytoplasm. It catalyses the reaction tRNA(Glu) + L-glutamate + ATP = L-glutamyl-tRNA(Glu) + AMP + diphosphate. Catalyzes the attachment of glutamate to tRNA(Glu) in a two-step reaction: glutamate is first activated by ATP to form Glu-AMP and then transferred to the acceptor end of tRNA(Glu). This is Glutamate--tRNA ligase from Thermofilum pendens (strain DSM 2475 / Hrk 5).